We begin with the raw amino-acid sequence, 290 residues long: UBX domain-containing protein 1-B (290 aa).

One can recognise a UBA domain in the interval 1-42 (MADCSALESLIEMGFSPSRAEKALSATGNQGIEPAMDWLVEH). Residues 49–210 (KEPSVVIPED…VQEPPTKKEY (162 aa)) form a disordered region. 2 stretches are compositionally biased toward basic and acidic residues: residues 80 to 117 (PLTE…EQEK) and 132 to 172 (RMQE…DRAR). Residues 81–171 (LTEEEKEKQT…KIARDKADRA (91 aa)) adopt a coiled-coil conformation. The span at 185–201 (PAETSVPATAPSPSSPV) shows a compositional bias: low complexity. Residues 208–287 (KEYDQCRIQV…GLVPTAVLIV (80 aa)) enclose the UBX domain.

The protein localises to the cytoplasm. Its function is as follows. Component of a complex required to couple deglycosylation and proteasome-mediated degradation of misfolded proteins in the endoplasmic reticulum that are retrotranslocated in the cytosol. Involved in ubiquitin-proteasome systems. This chain is UBX domain-containing protein 1-B (ubxn1-b), found in Xenopus laevis (African clawed frog).